The sequence spans 141 residues: Ribosome-binding factor A (141 aa).

Belongs to the RbfA family. As to quaternary structure, monomer. Binds 30S ribosomal subunits, but not 50S ribosomal subunits or 70S ribosomes.

The protein resides in the cytoplasm. Its function is as follows. One of several proteins that assist in the late maturation steps of the functional core of the 30S ribosomal subunit. Associates with free 30S ribosomal subunits (but not with 30S subunits that are part of 70S ribosomes or polysomes). Required for efficient processing of 16S rRNA. May interact with the 5'-terminal helix region of 16S rRNA. This Maricaulis maris (strain MCS10) (Caulobacter maris) protein is Ribosome-binding factor A.